Reading from the N-terminus, the 587-residue chain is Vesicular glutamate transporter 2.2 (587 aa).

Residues 1-71 (MDTVKERVLA…CTCFGLPRRY (71 aa)) lie on the Cytoplasmic side of the membrane. Residues 72-92 (IIAIMSGLGFCISFGIRCNLG) form a helical membrane-spanning segment. The Vesicular segment spans residues 93–125 (VAIVDMVNNSTIHKGGKIIIKGKAKFNWDPETV). Residues asparagine 100 and asparagine 101 are each glycosylated (N-linked (GlcNAc...) asparagine). Residues 126–146 (GMIHGSFFWGYTVTQIPGGYI) traverse the membrane as a helical segment. The Cytoplasmic portion of the chain corresponds to 147–149 (SSR). Residues 150–170 (LAANRVFGAAILLTSTLNMFI) traverse the membrane as a helical segment. Residues 171-180 (PSAARVHYGC) lie on the Vesicular side of the membrane. A helical membrane pass occupies residues 181 to 203 (VMFVRILQGLVEGVTYPACHGIW). At 204–217 (SKWAPPLERSRLAT) the chain is on the cytoplasmic side. The chain crosses the membrane as a helical span at residues 218-238 (TSFCGSYAGAVVAMPLAGILV). Topologically, residues 239-245 (QYSGWSS) are vesicular. The helical transmembrane segment at 246-266 (VFYIYGSFGIVWYMFWILVSY) threads the bilayer. At 267-311 (ESPADHPTITDEERTYIEESIGESAKLLGAMEKYKTPWRKFFTSM) the chain is on the cytoplasmic side. Residues 312 to 332 (PVYAIIVANFCRSWTFYLLLI) traverse the membrane as a helical segment. The Vesicular portion of the chain corresponds to 333 to 350 (SQPAYFEEVFGFEISKVG). Residues 351 to 371 (MVSALPHLVMTIIVPIGGQLA) traverse the membrane as a helical segment. At 372-387 (DYLRSKNILTTTTVRK) the chain is on the cytoplasmic side. The helical transmembrane segment at 388-408 (IMNCGGFGMEATLLLVVGFSH) threads the bilayer. The Vesicular portion of the chain corresponds to 409-410 (SK). A helical membrane pass occupies residues 411–431 (GVAISFLVLAVGFSGFAISGF). The Cytoplasmic segment spans residues 432-444 (NVNHLDIAPRYAS). Residues 445–465 (ILMGISNGVGTLSGMVCPLIV) form a helical membrane-spanning segment. Topologically, residues 466-479 (GAMTKNKTREEWQN) are vesicular. N-linked (GlcNAc...) asparagine glycosylation occurs at asparagine 471. A helical transmembrane segment spans residues 480-500 (VFLIASLVHYGGVIFYGIFAS). Residues 501–587 (GEKQPWADPE…ERTYTGDGYS (87 aa)) are Cytoplasmic-facing.

The protein belongs to the major facilitator superfamily. Sodium/anion cotransporter family. VGLUT subfamily. In terms of tissue distribution, expressed in spinal cord.

It localises to the cytoplasmic vesicle. It is found in the secretory vesicle. The protein resides in the synaptic vesicle membrane. Its subcellular location is the membrane. The protein localises to the synapse. It localises to the synaptosome. It is found in the cell membrane. It carries out the reaction L-glutamate(out) = L-glutamate(in). It catalyses the reaction 3 Na(+)(out) + phosphate(out) = 3 Na(+)(in) + phosphate(in). The enzyme catalyses phosphate(in) = phosphate(out). The catalysed reaction is K(+)(in) + H(+)(out) = K(+)(out) + H(+)(in). It carries out the reaction chloride(in) = chloride(out). Its activity is regulated as follows. Chloride channel activity is allosterically activated by lumenal H(+) and Cl(-) leading to synaptic vesicles acidification. The L-glutamate transport activity is allosterically activated by lumenal H(+) and Cl(-). The allosteric requirement for H(+) efficiently prevents non-vesicular efflux across the plasma membrane. The L-glutamate uniporter activity exhibits a biphasic dependence on chloride concentration. Multifunctional transporter that transports L-glutamate as well as multiple ions such as chloride, proton, potassium, sodium and phosphate. At the synaptic vesicle membrane, mainly functions as a uniporter which transports preferentially L-glutamate but also, phosphate from the cytoplasm into synaptic vesicles at presynaptic nerve terminals of excitatory neural cells. The L-glutamate or phosphate uniporter activity is electrogenic and is driven by the proton electrochemical gradient, mainly by the electrical gradient established by the vacuolar H(+)-ATPase across the synaptic vesicle membrane. In addition, functions as a chloride channel that allows a chloride permeation through the synaptic vesicle membrane therefore affects the proton electrochemical gradient and promotes synaptic vesicles acidification. Moreover, functions as a vesicular K(+)/H(+) antiport allowing to maintain the electrical gradient and to decrease chemical gradient and therefore sustain vesicular L-glutamate uptake. The vesicular H(+)/H(+) antiport activity is electroneutral. At the plasma membrane, following exocytosis, functions as a symporter of Na(+) and phosphate from the extracellular space to the cytoplasm allowing synaptic phosphate homeostasis regulation. The symporter activity is driven by an inside negative membrane potential and is electrogenic. Also involved in the regulation of retinal hyaloid vessel regression during postnatal development. May also play a role in the endocrine L-glutamatergic system of other tissues such as pineal gland and pancreas. This chain is Vesicular glutamate transporter 2.2 (slc17a6a), found in Danio rerio (Zebrafish).